We begin with the raw amino-acid sequence, 92 residues long: Small ribosomal subunit protein uS19 (92 aa).

It belongs to the universal ribosomal protein uS19 family.

In terms of biological role, protein S19 forms a complex with S13 that binds strongly to the 16S ribosomal RNA. This is Small ribosomal subunit protein uS19 from Novosphingobium aromaticivorans (strain ATCC 700278 / DSM 12444 / CCUG 56034 / CIP 105152 / NBRC 16084 / F199).